The chain runs to 413 residues: Divalent metal cation transporter MntH (413 aa).

At 1-19 the chain is on the cytoplasmic side; that stretch reads MTDNRVENSSGRAARKLRL. A helical membrane pass occupies residues 20-39; sequence ALMGPAFIAAIGYIDPGNFA. Residues 40–51 are Periplasmic-facing; the sequence is TNIQAGASFGYQ. A helical transmembrane segment spans residues 52–71; that stretch reads LLWVVVWANLMAMLIQILSA. At 72-95 the chain is on the cytoplasmic side; that stretch reads KLGIATGKNLAEQIRDHYPRPVVW. A helical transmembrane segment spans residues 96-118; the sequence is FYWVQAEIIAMATDLAEFIGAAI. Topologically, residues 119-125 are periplasmic; it reads GFKLILG. Residues 126–145 traverse the membrane as a helical segment; that stretch reads VSLLQGAVLTGIATFLILML. The Cytoplasmic portion of the chain corresponds to 146–155; the sequence is QRRGQKPLEK. A helical transmembrane segment spans residues 156–175; the sequence is VIGGLLLFVAAAYIVELFFS. At 176 to 196 the chain is on the periplasmic side; the sequence is QPDMAQLGKGMVIPALPNPEA. The helical transmembrane segment at 197–220 threads the bilayer; it reads VFLAAGVLGATIMPHVIYLHSSLT. Topologically, residues 221–238 are cytoplasmic; the sequence is QHLHGGTRQQRYSATKWD. The chain crosses the membrane as a helical span at residues 239-258; the sequence is VAIAMTIAGFVNLAMMATAA. The Periplasmic segment spans residues 259 to 276; sequence AAFHFSGHTGIADLDQAY. A helical transmembrane segment spans residues 277–297; it reads LTLEPLLSHAAATVFGLSLVA. Topologically, residues 298 to 327 are cytoplasmic; sequence AGLSSTVVGTLAGQVVMQGFVRFHIPLWVR. Residues 328-344 form a helical membrane-spanning segment; the sequence is RTITMLPSFIVILMGLD. The Periplasmic segment spans residues 345-350; sequence PTRILV. The chain crosses the membrane as a helical span at residues 351–370; that stretch reads MSQVLLSFGIALALVPLLIF. The Cytoplasmic segment spans residues 371-387; that stretch reads TSNATLMGELVNTRRVK. Residues 388 to 406 form a helical membrane-spanning segment; that stretch reads QIGWIIVVLVVALNIWLLV. At 407 to 413 the chain is on the periplasmic side; the sequence is GTVMGLS.

The protein belongs to the NRAMP family.

Its subcellular location is the cell inner membrane. H(+)-stimulated, divalent metal cation uptake system. The chain is Divalent metal cation transporter MntH from Salmonella schwarzengrund (strain CVM19633).